The sequence spans 677 residues: Methionine--tRNA ligase (677 aa).

The short motif at 14-24 (PYANGAIHLGH) is the 'HIGH' region element. Zn(2+)-binding residues include Cys145, Cys148, Cys158, and Cys161. The short motif at 330-334 (KMSKS) is the 'KMSKS' region element. Residue Lys333 coordinates ATP. The region spanning 576–677 (DFAKVDLRVA…EGALPGMRVM (102 aa)) is the tRNA-binding domain.

Belongs to the class-I aminoacyl-tRNA synthetase family. MetG type 1 subfamily. Homodimer. It depends on Zn(2+) as a cofactor.

The protein localises to the cytoplasm. The catalysed reaction is tRNA(Met) + L-methionine + ATP = L-methionyl-tRNA(Met) + AMP + diphosphate. In terms of biological role, is required not only for elongation of protein synthesis but also for the initiation of all mRNA translation through initiator tRNA(fMet) aminoacylation. The sequence is that of Methionine--tRNA ligase from Saccharophagus degradans (strain 2-40 / ATCC 43961 / DSM 17024).